Consider the following 284-residue polypeptide: Bifunctional protein FolD (284 aa).

Residues 165 to 167 (GAS), serine 190, and isoleucine 231 contribute to the NADP(+) site.

Belongs to the tetrahydrofolate dehydrogenase/cyclohydrolase family. Homodimer.

It catalyses the reaction (6R)-5,10-methylene-5,6,7,8-tetrahydrofolate + NADP(+) = (6R)-5,10-methenyltetrahydrofolate + NADPH. The catalysed reaction is (6R)-5,10-methenyltetrahydrofolate + H2O = (6R)-10-formyltetrahydrofolate + H(+). It participates in one-carbon metabolism; tetrahydrofolate interconversion. Its function is as follows. Catalyzes the oxidation of 5,10-methylenetetrahydrofolate to 5,10-methenyltetrahydrofolate and then the hydrolysis of 5,10-methenyltetrahydrofolate to 10-formyltetrahydrofolate. In Bordetella avium (strain 197N), this protein is Bifunctional protein FolD.